Reading from the N-terminus, the 448-residue chain is 5-hydroxytryptamine receptor 7 (448 aa).

Over 1–86 the chain is Extracellular; sequence MMDVNSSGRP…INYGRVEKVV (86 aa). N-linked (GlcNAc...) asparagine glycosylation is found at Asn-5 and Asn-69. A helical transmembrane segment spans residues 87 to 111; it reads IGSILTLITLLTIAGNCLVVISVCF. Topologically, residues 112 to 121 are cytoplasmic; sequence VKKLRQPSNY. A helical transmembrane segment spans residues 122-143; the sequence is LIVSLALADLSVAVAVMPFVSV. Over 144-155 the chain is Extracellular; the sequence is TDLIGGKWIFGH. The helical transmembrane segment at 156-181 threads the bilayer; sequence FFCNVFIAMDVMCCTASIMTLCVISI. Cys-158 and Cys-234 are oxidised to a cystine. Asp-165 provides a ligand contact to serotonin. Residues 182 to 201 lie on the Cytoplasmic side of the membrane; the sequence is DRYLGITRPLTYPVRQNGKC. Residues 202–222 traverse the membrane as a helical segment; that stretch reads MAKMILSVWLLSASITLPPLF. Residues 223–240 are Extracellular-facing; sequence GWAQNVNDDKVCLISQDF. A helical transmembrane segment spans residues 241 to 263; that stretch reads GYTIYSTAVAFYIPMSVMLFMYY. Over 264-329 the chain is Cytoplasmic; that stretch reads QIYKAARKSA…SIFKREQKAA (66 aa). The helical transmembrane segment at 330–355 threads the bilayer; it reads TTLGIIVGAFTVCWLPFFLLSTARPF. The Extracellular portion of the chain corresponds to 356–366; sequence ICGTSCSCIPL. Residues 367-390 traverse the membrane as a helical segment; that stretch reads WVERTCLWLGYANSLINPFIYAFF. The Cytoplasmic portion of the chain corresponds to 391 to 448; it reads NRDLRTTYRSLLQCQYRNINRKLSAAGMHEALKLAERPERSEFVLQNSDHCGKKGHDT. The S-palmitoyl cysteine moiety is linked to residue Cys-404.

Belongs to the G-protein coupled receptor 1 family. As to expression, thalamus, hypothalamus, and the hippocampal rudiments.

The protein localises to the cell membrane. G-protein coupled receptor for 5-hydroxytryptamine (serotonin), a biogenic hormone that functions as a neurotransmitter, a hormone and a mitogen. Ligand binding causes a conformation change that triggers signaling via guanine nucleotide-binding proteins (G proteins) and modulates the activity of downstream effectors. HTR7 is coupled to G(s) G alpha proteins and mediates activation of adenylate cyclase activity. In Rattus norvegicus (Rat), this protein is 5-hydroxytryptamine receptor 7.